We begin with the raw amino-acid sequence, 342 residues long: Tetraacyldisaccharide 4'-kinase (342 aa).

68–75 is an ATP binding site; it reads TVGGTGKT.

This sequence belongs to the LpxK family.

The enzyme catalyses a lipid A disaccharide + ATP = a lipid IVA + ADP + H(+). It functions in the pathway glycolipid biosynthesis; lipid IV(A) biosynthesis; lipid IV(A) from (3R)-3-hydroxytetradecanoyl-[acyl-carrier-protein] and UDP-N-acetyl-alpha-D-glucosamine: step 6/6. Its function is as follows. Transfers the gamma-phosphate of ATP to the 4'-position of a tetraacyldisaccharide 1-phosphate intermediate (termed DS-1-P) to form tetraacyldisaccharide 1,4'-bis-phosphate (lipid IVA). The polypeptide is Tetraacyldisaccharide 4'-kinase (Burkholderia pseudomallei (strain K96243)).